The chain runs to 408 residues: Probable cysteine desulfurase (408 aa).

Lys-225 carries the N6-(pyridoxal phosphate)lysine modification.

This sequence belongs to the class-V pyridoxal-phosphate-dependent aminotransferase family. Csd subfamily. The cofactor is pyridoxal 5'-phosphate.

It carries out the reaction (sulfur carrier)-H + L-cysteine = (sulfur carrier)-SH + L-alanine. In terms of biological role, catalyzes the removal of elemental sulfur and selenium atoms from L-cysteine, L-cystine, L-selenocysteine, and L-selenocystine to produce L-alanine. The polypeptide is Probable cysteine desulfurase (csd) (Mycoplasma pneumoniae (strain ATCC 29342 / M129 / Subtype 1) (Mycoplasmoides pneumoniae)).